Reading from the N-terminus, the 432-residue chain is Competence protein ComFA (432 aa).

Zn(2+) is bound by residues Cys40, Cys43, Cys60, and Cys63. One can recognise a Helicase ATP-binding domain in the interval 107–257; the sequence is LQAVDKQKPT…RLGELKRLNL (151 aa). 120–127 provides a ligand contact to ATP; sequence AVTGAGKT. The DEAD box motif lies at 205–208; sequence DEVD. The 144-residue stretch at 289-432 folds into the Helicase C-terminal domain; it reads KLKSYIEKQR…IQMMNKEAGL (144 aa).

Belongs to the DEAD box helicase family. Monomer and dimer in solution. Interacts with DprA and ComFC; ComFA-ComFC form rings about 150 Angstroms in diameter with apparent 6-fold symmetry. The cofactor is Zn(2+).

It is found in the cytoplasm. Involved in transformation (genetic competence for DNA uptake). DNA uptake is energy dependent, this protein may provide the driving force for DNA uptake. Does not have helicase activity, translocates on single-stranded (ss)DNA in a 5'-3' direction in an ATP-dependent manner, but does not unwind double-stranded (ds)DNA (tested with 5'- and 3'-overhang dsDNA). ATP hydrolysis causes the release of ssDNA from ComFA. A ssDNA-stimulated ATPase; dsDNA does not stimulate ATPase. ATP hydrolysis causes the release of ssDNA from ComFA. ComFC has no effect on ATPase activity. Binds ssDNA but only very poorly to dsDNA in the absence of ATP. Binding to ssDNA does not require free DNA ends. The polypeptide is Competence protein ComFA (Streptococcus pneumoniae (strain ATCC BAA-255 / R6)).